The sequence spans 189 residues: GTP cyclohydrolase 1 (189 aa).

C78, H81, and C150 together coordinate Zn(2+).

This sequence belongs to the GTP cyclohydrolase I family. In terms of assembly, homomer.

The enzyme catalyses GTP + H2O = 7,8-dihydroneopterin 3'-triphosphate + formate + H(+). Its pathway is cofactor biosynthesis; 7,8-dihydroneopterin triphosphate biosynthesis; 7,8-dihydroneopterin triphosphate from GTP: step 1/1. This chain is GTP cyclohydrolase 1, found in Bacillus mycoides (strain KBAB4) (Bacillus weihenstephanensis).